The chain runs to 329 residues: Malate dehydrogenase (329 aa).

12 to 18 contacts NAD(+); that stretch reads GAAGQIG. 2 residues coordinate substrate: arginine 95 and arginine 101. Residues asparagine 108, glutamine 115, and 132–134 contribute to the NAD(+) site; that span reads VGN. 2 residues coordinate substrate: asparagine 134 and arginine 165. Residue histidine 190 is the Proton acceptor of the active site.

Belongs to the LDH/MDH superfamily. MDH type 2 family.

It catalyses the reaction (S)-malate + NAD(+) = oxaloacetate + NADH + H(+). Its function is as follows. Catalyzes the reversible oxidation of malate to oxaloacetate. The polypeptide is Malate dehydrogenase (Herminiimonas arsenicoxydans).